A 185-amino-acid chain; its full sequence is Peptidyl-tRNA hydrolase (185 aa).

Tyrosine 14 is a tRNA binding site. Histidine 19 functions as the Proton acceptor in the catalytic mechanism. TRNA is bound by residues tyrosine 65, asparagine 67, and asparagine 113.

This sequence belongs to the PTH family. As to quaternary structure, monomer.

Its subcellular location is the cytoplasm. The enzyme catalyses an N-acyl-L-alpha-aminoacyl-tRNA + H2O = an N-acyl-L-amino acid + a tRNA + H(+). Its function is as follows. Hydrolyzes ribosome-free peptidyl-tRNAs (with 1 or more amino acids incorporated), which drop off the ribosome during protein synthesis, or as a result of ribosome stalling. In terms of biological role, catalyzes the release of premature peptidyl moieties from peptidyl-tRNA molecules trapped in stalled 50S ribosomal subunits, and thus maintains levels of free tRNAs and 50S ribosomes. This is Peptidyl-tRNA hydrolase from Rickettsia felis (strain ATCC VR-1525 / URRWXCal2) (Rickettsia azadi).